Reading from the N-terminus, the 121-residue chain is Large ribosomal subunit protein bL20c (121 aa).

It belongs to the bacterial ribosomal protein bL20 family.

Its subcellular location is the plastid. It is found in the chloroplast. In terms of biological role, binds directly to 23S ribosomal RNA and is necessary for the in vitro assembly process of the 50S ribosomal subunit. It is not involved in the protein synthesizing functions of that subunit. The sequence is that of Large ribosomal subunit protein bL20c from Lotus japonicus (Lotus corniculatus var. japonicus).